Consider the following 87-residue polypeptide: MKVTIKSIWNTVSAWHWDVNEECCGICRMAFDGCCVDCKIPGDDCPPVWGVCNHAFHMHCILKWLNANELQQCPMCRSEWRFKSDEK.

Residues 35–77 (CVDCKIPGDDCPPVWGVCNHAFHMHCILKWLNANELQQCPMCR) form an RING-type; atypical zinc finger.

Belongs to the RING-box family. As to quaternary structure, the APC/C is composed of at least 13 subunits that stay tightly associated throughout the cell cycle: anapc1, anapc2, anapc3, anapc4, anapc5, anapc6, anapc7, anapc8, anapc10, anapc11, cdc20, cdc26 and cdh1.

The protein resides in the nucleus. The protein operates within protein modification; protein ubiquitination. Component of the anaphase promoting complex/cyclosome (APC/C), a cell cycle-regulated E3 ubiquitin-protein ligase complex that controls progression through mitosis and the G1 phase of the cell cycle. The chain is Anaphase-promoting complex subunit 11 (anapc11) from Dictyostelium discoideum (Social amoeba).